The primary structure comprises 327 residues: Gonadotropin-releasing hormone receptor (327 aa).

At 1–38 (MANNASLEQDQNHCSAINNSIPLTQGKLPTLTLSGKIR) the chain is on the extracellular side. Residues Asn-4 and Asn-18 are each glycosylated (N-linked (GlcNAc...) asparagine). A helical membrane pass occupies residues 39-58 (VTVTFFLFLLSTAFNASFLV). Topologically, residues 59-77 (KLQRWTQKRKKGKKLSRMK) are cytoplasmic. A helical transmembrane segment spans residues 78 to 97 (VLLKHLTLANLLETLIVMPL). Over 98-115 (DGMWNITVQWYAGEFLCK) the chain is Extracellular. An N-linked (GlcNAc...) asparagine glycan is attached at Asn-102. Residues Cys-114 and Cys-195 are joined by a disulfide bond. Residues 116–137 (VLSYLKLFSMYAPAFMMVVISL) traverse the membrane as a helical segment. The Cytoplasmic segment spans residues 138-164 (DRSLAVTQPLAVQSKSKLERSMTSLAW). The chain crosses the membrane as a helical span at residues 165 to 184 (ILSIVFAGPQLYIFRMIYLA). Residues 185–211 (DGSGPAVFSQCVTHCSFPQWWHEAFYN) lie on the Extracellular side of the membrane. Residues 212–231 (FFTFSCLFIIPLLIMLICNA) form a helical membrane-spanning segment. Residues 232-280 (KIIFALTRVLHQDPRKLQLNQSKNNIPRARLRTLKMTVAFGTSFVICWT) lie on the Cytoplasmic side of the membrane. The chain crosses the membrane as a helical span at residues 281–299 (PYYVLGIWYWFDPEMLNRV). At 300–305 (SEPVNH) the chain is on the extracellular side. A helical transmembrane segment spans residues 306-325 (FFFLFAFLNPCFDPLIYGYF). The Cytoplasmic segment spans residues 326–327 (SL).

The protein belongs to the G-protein coupled receptor 1 family.

It is found in the cell membrane. In terms of biological role, receptor for gonadotropin releasing hormone (GnRH) that mediates the action of GnRH to stimulate the secretion of the gonadotropic hormones luteinizing hormone (LH) and follicle-stimulating hormone (FSH). This receptor mediates its action by association with G-proteins that activate a phosphatidylinositol-calcium second messenger system. In Rattus norvegicus (Rat), this protein is Gonadotropin-releasing hormone receptor (Gnrhr).